The following is a 295-amino-acid chain: Phosphonoacetaldehyde hydrolase (295 aa).

Residue Asp36 is the Nucleophile of the active site. Mg(2+) contacts are provided by Asp36 and Ala38. Catalysis depends on Lys78, which acts as the Schiff-base intermediate with substrate. Position 212 (Asp212) interacts with Mg(2+).

It belongs to the HAD-like hydrolase superfamily. PhnX family. In terms of assembly, homodimer. Mg(2+) is required as a cofactor.

It catalyses the reaction phosphonoacetaldehyde + H2O = acetaldehyde + phosphate + H(+). Its function is as follows. Involved in phosphonate degradation. The sequence is that of Phosphonoacetaldehyde hydrolase from Psychromonas ingrahamii (strain DSM 17664 / CCUG 51855 / 37).